A 486-amino-acid chain; its full sequence is Ribulose bisphosphate carboxylase large chain (486 aa).

Residues N125 and T175 each coordinate substrate. The Proton acceptor role is filled by K177. K179 contacts substrate. Mg(2+) is bound by residues K203, D205, and E206. K203 carries the post-translational modification N6-carboxylysine. Catalysis depends on H295, which acts as the Proton acceptor. Residues R296, H328, and S380 each contribute to the substrate site.

This sequence belongs to the RuBisCO large chain family. Type I subfamily. As to quaternary structure, heterohexadecamer of 8 large chains and 8 small chains. Mg(2+) serves as cofactor.

It carries out the reaction 2 (2R)-3-phosphoglycerate + 2 H(+) = D-ribulose 1,5-bisphosphate + CO2 + H2O. The enzyme catalyses D-ribulose 1,5-bisphosphate + O2 = 2-phosphoglycolate + (2R)-3-phosphoglycerate + 2 H(+). Functionally, ruBisCO catalyzes two reactions: the carboxylation of D-ribulose 1,5-bisphosphate, the primary event in carbon dioxide fixation, as well as the oxidative fragmentation of the pentose substrate. Both reactions occur simultaneously and in competition at the same active site. The chain is Ribulose bisphosphate carboxylase large chain from Cereibacter sphaeroides (Rhodobacter sphaeroides).